The primary structure comprises 390 residues: Uroporphyrinogen decarboxylase 2, chloroplastic (390 aa).

The N-terminal 30 residues, 1-30 (MATACPPLSLQPAYLSGRSARARRPPPAVR), are a transit peptide targeting the chloroplast. Substrate-binding positions include 70 to 74 (RQAGR), Phe89, Ser119, Asp120, Tyr197, Ser252, and His367.

It belongs to the uroporphyrinogen decarboxylase family. In terms of assembly, homodimer.

It localises to the plastid. Its subcellular location is the chloroplast. The enzyme catalyses uroporphyrinogen III + 4 H(+) = coproporphyrinogen III + 4 CO2. The protein operates within porphyrin-containing compound metabolism; protoporphyrin-IX biosynthesis; coproporphyrinogen-III from 5-aminolevulinate: step 4/4. In terms of biological role, catalyzes the decarboxylation of four acetate groups of uroporphyrinogen-III to yield coproporphyrinogen-III. The chain is Uroporphyrinogen decarboxylase 2, chloroplastic from Oryza sativa subsp. japonica (Rice).